A 120-amino-acid chain; its full sequence is Large ribosomal subunit protein uL22 (120 aa).

This sequence belongs to the universal ribosomal protein uL22 family. Part of the 50S ribosomal subunit.

Its function is as follows. This protein binds specifically to 23S rRNA; its binding is stimulated by other ribosomal proteins, e.g. L4, L17, and L20. It is important during the early stages of 50S assembly. It makes multiple contacts with different domains of the 23S rRNA in the assembled 50S subunit and ribosome. The globular domain of the protein is located near the polypeptide exit tunnel on the outside of the subunit, while an extended beta-hairpin is found that lines the wall of the exit tunnel in the center of the 70S ribosome. The protein is Large ribosomal subunit protein uL22 of Corynebacterium efficiens (strain DSM 44549 / YS-314 / AJ 12310 / JCM 11189 / NBRC 100395).